We begin with the raw amino-acid sequence, 172 residues long: Adrenodoxin-like protein 1, mitochondrial (172 aa).

One can recognise a 2Fe-2S ferredoxin-type domain in the interval 57 to 159 (VNITYVDKDG…GMELELPKAT (103 aa)). Cysteine 94, cysteine 100, cysteine 103, and cysteine 140 together coordinate [2Fe-2S] cluster.

This sequence belongs to the adrenodoxin/putidaredoxin family. Requires [2Fe-2S] cluster as cofactor.

It localises to the mitochondrion matrix. In terms of biological role, required for ecdysteroidogenesis in the prothoracic gland which is necessary for larval to pupal transition. This chain is Adrenodoxin-like protein 1, mitochondrial, found in Drosophila melanogaster (Fruit fly).